We begin with the raw amino-acid sequence, 872 residues long: FHIP family protein CBG19667 (872 aa).

The disordered stretch occupies residues 800 to 841 (SRSSPRSADEHDSTLFYGRSTIPPPGRKPLLREPSHQETLDD). Positions 829–841 (LLREPSHQETLDD) are enriched in basic and acidic residues.

It belongs to the FHIP family.

This is FHIP family protein CBG19667 from Caenorhabditis briggsae.